Consider the following 202-residue polypeptide: MFRRTYFWLMLLPLFMVGCTGLPDHPTSVEWQSHQAKLSQIQSFQAVGKLGYISPDQRQNLNFYWKHSPEQSNLRFTTFLGQTALNLTMTPQGARVETYDDQILTAANATALVQQLTGLVIPVEQLSDWIIGLPNGADDFQLNEQNTLSSLEKDLNFQRWHIAYTQYRDVEFHQQVVPLPAKLSLTQQDIKLNIVVSKWTLK.

Positions 1–18 (MFRRTYFWLMLLPLFMVG) are cleaved as a signal peptide. The N-palmitoyl cysteine moiety is linked to residue Cys19. Cys19 is lipidated: S-diacylglycerol cysteine.

This sequence belongs to the LolB family. In terms of assembly, monomer.

It is found in the cell outer membrane. Plays a critical role in the incorporation of lipoproteins in the outer membrane after they are released by the LolA protein. The protein is Outer-membrane lipoprotein LolB of Vibrio vulnificus (strain YJ016).